The chain runs to 113 residues: N(2)-fixation sustaining protein CowN (113 aa).

Belongs to the CowN family.

Functionally, is required to sustain N(2)-dependent growth in the presence of low levels of carbon monoxide (CO). Probably acts by protecting the N(2) fixation ability of the nitrogenase complex, which is inactivated in the presence of CO. The protein is N(2)-fixation sustaining protein CowN of Wolinella succinogenes (strain ATCC 29543 / DSM 1740 / CCUG 13145 / JCM 31913 / LMG 7466 / NCTC 11488 / FDC 602W) (Vibrio succinogenes).